Here is a 76-residue protein sequence, read N- to C-terminus: Dermaseptin-B4 (76 aa).

The first 22 residues, 1–22 (MAFLKKSLFLVLFLGLVSLSIC), serve as a signal peptide directing secretion. A propeptide spanning residues 23–43 (EEEKRENKDEIEQEDDEQSEE) is cleaved from the precursor. Gln-73 is modified (glutamine amide). Positions 75 to 76 (EQ) are excised as a propeptide.

This sequence belongs to the frog skin active peptide (FSAP) family. Dermaseptin subfamily. Expressed by the skin glands.

It localises to the secreted. Potent antimicrobial peptide with potent activity against Gram-positive and Gram-negative bacteria. Probably acts by disturbing membrane functions with its amphipathic structure. Has an activity of stimulation of insulin release, which may protect the species from being eaten by predators by causing fatal hypoglycemia. Has hemolytic activity. This chain is Dermaseptin-B4, found in Phyllomedusa bicolor (Two-colored leaf frog).